A 612-amino-acid chain; its full sequence is Protein lin-61 (612 aa).

MBT repeat units follow at residues 143–249, 263–380, 381–501, and 508–607; these read YLWE…MDKI, NDMV…GYQL, NAKK…LVPP, and FRWD…LQPP.

As to quaternary structure, interacts preferentially with histone H3 that is dimethylated or trimethylated at 'Lys-9'.

It localises to the nucleus. The protein resides in the chromosome. Its function is as follows. Synthetic multivulva class B (synMuvB) protein required to repress the induction of vulval development by Ras signaling. Unlike other synMuv proteins it does not associate with the multiprotein DRM complex and the NuRD-like complex. Interaction with methylated histone H3 is essential for vulva development. It has a role in maintaining genome stability. The polypeptide is Protein lin-61 (lin-61) (Caenorhabditis elegans).